We begin with the raw amino-acid sequence, 248 residues long: Ubiquinone biosynthesis O-methyltransferase (248 aa).

S-adenosyl-L-methionine contacts are provided by arginine 41, glycine 72, aspartate 93, and methionine 136.

It belongs to the methyltransferase superfamily. UbiG/COQ3 family.

It catalyses the reaction a 3-demethylubiquinol + S-adenosyl-L-methionine = a ubiquinol + S-adenosyl-L-homocysteine + H(+). The catalysed reaction is a 3-(all-trans-polyprenyl)benzene-1,2-diol + S-adenosyl-L-methionine = a 2-methoxy-6-(all-trans-polyprenyl)phenol + S-adenosyl-L-homocysteine + H(+). Its pathway is cofactor biosynthesis; ubiquinone biosynthesis. Its function is as follows. O-methyltransferase that catalyzes the 2 O-methylation steps in the ubiquinone biosynthetic pathway. In Brucella anthropi (strain ATCC 49188 / DSM 6882 / CCUG 24695 / JCM 21032 / LMG 3331 / NBRC 15819 / NCTC 12168 / Alc 37) (Ochrobactrum anthropi), this protein is Ubiquinone biosynthesis O-methyltransferase.